The sequence spans 184 residues: ATP synthase subunit b, chloroplastic (184 aa).

Residues 27–49 traverse the membrane as a helical segment; it reads LATNPINLSVVLGVLIFFGKGVL.

Belongs to the ATPase B chain family. F-type ATPases have 2 components, F(1) - the catalytic core - and F(0) - the membrane proton channel. F(1) has five subunits: alpha(3), beta(3), gamma(1), delta(1), epsilon(1). F(0) has four main subunits: a(1), b(1), b'(1) and c(10-14). The alpha and beta chains form an alternating ring which encloses part of the gamma chain. F(1) is attached to F(0) by a central stalk formed by the gamma and epsilon chains, while a peripheral stalk is formed by the delta, b and b' chains.

The protein localises to the plastid. It is found in the chloroplast thylakoid membrane. F(1)F(0) ATP synthase produces ATP from ADP in the presence of a proton or sodium gradient. F-type ATPases consist of two structural domains, F(1) containing the extramembraneous catalytic core and F(0) containing the membrane proton channel, linked together by a central stalk and a peripheral stalk. During catalysis, ATP synthesis in the catalytic domain of F(1) is coupled via a rotary mechanism of the central stalk subunits to proton translocation. Its function is as follows. Component of the F(0) channel, it forms part of the peripheral stalk, linking F(1) to F(0). This chain is ATP synthase subunit b, chloroplastic, found in Chloranthus spicatus (Chulantree).